The sequence spans 202 residues: Imidazoleglycerol-phosphate dehydratase (202 aa).

Belongs to the imidazoleglycerol-phosphate dehydratase family.

The protein resides in the cytoplasm. It catalyses the reaction D-erythro-1-(imidazol-4-yl)glycerol 3-phosphate = 3-(imidazol-4-yl)-2-oxopropyl phosphate + H2O. It functions in the pathway amino-acid biosynthesis; L-histidine biosynthesis; L-histidine from 5-phospho-alpha-D-ribose 1-diphosphate: step 6/9. In Sinorhizobium fredii (strain NBRC 101917 / NGR234), this protein is Imidazoleglycerol-phosphate dehydratase.